A 149-amino-acid polypeptide reads, in one-letter code: uncharacterized protein (149 aa).

This is an uncharacterized protein from Caenorhabditis elegans.